A 134-amino-acid chain; its full sequence is Fluoride-specific ion channel FluC (134 aa).

The next 4 helical transmembrane spans lie at 7 to 27 (LAVA…TIMA), 38 to 58 (GTLL…IVLV), 69 to 89 (LFLF…AAES), and 110 to 130 (VGSL…LLGH). G77 and T80 together coordinate Na(+).

It belongs to the fluoride channel Fluc/FEX (TC 1.A.43) family.

It is found in the cell inner membrane. The enzyme catalyses fluoride(in) = fluoride(out). Na(+) is not transported, but it plays an essential structural role and its presence is essential for fluoride channel function. Fluoride-specific ion channel. Important for reducing fluoride concentration in the cell, thus reducing its toxicity. The chain is Fluoride-specific ion channel FluC from Legionella pneumophila (strain Paris).